A 179-amino-acid polypeptide reads, in one-letter code: Probable chorismate pyruvate-lyase (179 aa).

Substrate-binding residues include arginine 82, leucine 120, and glutamate 165.

Belongs to the UbiC family.

The protein localises to the cytoplasm. The catalysed reaction is chorismate = 4-hydroxybenzoate + pyruvate. Its pathway is cofactor biosynthesis; ubiquinone biosynthesis. In terms of biological role, removes the pyruvyl group from chorismate, with concomitant aromatization of the ring, to provide 4-hydroxybenzoate (4HB) for the ubiquinone pathway. This chain is Probable chorismate pyruvate-lyase, found in Vibrio vulnificus (strain YJ016).